The chain runs to 436 residues: MPASNFPTGVHDMRLGVIADDFTGATDIAGFLVGNGLRTIQLNGVPADDLAVDADAVVISLKARSCPTGQAIAESLAALKWLQKNNCQQFFFKYCSTFDSTPKGNIGPVTDALLEALGEEFTVICPALPVNGRTIYNGYLFVNGVLLSETGMRNHPVTPMTDSNIMRVMESQSRGRAGNISSTIVDQGSDAVRDALRKLQSEGIRYAVLDALNDQHIETLGRAVSQMKLVTGGSGLADGMARAWTQLRGKNVAAAEAAGAPVKGRTVILSGSCSQMTNAQVAAYKAKAPALAMDVEKAINDAAYIDVLAEWVLAQSGDALPPLVYATMPPEALKAVQERFGGERASAAIEDLFGQLAKRLEAEGFTRFIVAGGETSGAVTQALAIDGFTIGPQIAPGVPWVRGIGKPLSLALKSGNFGTEAFFFEAQKIANQEGDK.

ATP-binding positions include Ser-272, 372–375 (GGET), and Gly-415.

Belongs to the four-carbon acid sugar kinase family.

It carries out the reaction 3-dehydro-L-erythronate + ATP = 3-dehydro-4-O-phospho-L-erythronate + ADP + H(+). It catalyses the reaction 3-dehydro-D-erythronate + ATP = 3-dehydro-4-O-phospho-D-erythronate + ADP + H(+). Functionally, catalyzes the ATP-dependent phosphorylation of 3-oxo-tetronate to 3-oxo-tetronate 4-phosphate. The sequence is that of 3-oxo-tetronate kinase from Brucella melitensis biotype 1 (strain ATCC 23456 / CCUG 17765 / NCTC 10094 / 16M).